The chain runs to 321 residues: ATP-dependent 6-phosphofructokinase (321 aa).

Residue Gly12 coordinates ATP. ADP contacts are provided by residues 22-26 (RGVVR) and 55-60 (RYSVSD). Residues 73–74 (RF) and 103–106 (GDGS) each bind ATP. Asp104 serves as a coordination point for Mg(2+). 127–129 (TID) is a substrate binding site. Residue Asp129 is the Proton acceptor of the active site. Residue Arg156 participates in ADP binding. Residues Arg164 and 171–173 (MGR) contribute to the substrate site. Residues 187 to 189 (GCE), Arg213, and 215 to 217 (KRH) each bind ADP. Substrate contacts are provided by residues Glu224, Arg245, and 251–254 (HIQR).

The protein belongs to the phosphofructokinase type A (PFKA) family. ATP-dependent PFK group I subfamily. Prokaryotic clade 'B1' sub-subfamily. Homotetramer. It depends on Mg(2+) as a cofactor.

It is found in the cytoplasm. The enzyme catalyses beta-D-fructose 6-phosphate + ATP = beta-D-fructose 1,6-bisphosphate + ADP + H(+). It functions in the pathway carbohydrate degradation; glycolysis; D-glyceraldehyde 3-phosphate and glycerone phosphate from D-glucose: step 3/4. Allosterically activated by ADP and other diphosphonucleosides, and allosterically inhibited by phosphoenolpyruvate. Catalyzes the phosphorylation of D-fructose 6-phosphate to fructose 1,6-bisphosphate by ATP, the first committing step of glycolysis. The protein is ATP-dependent 6-phosphofructokinase of Haemophilus influenzae (strain 86-028NP).